The sequence spans 97 residues: Aspartyl/glutamyl-tRNA(Asn/Gln) amidotransferase subunit C (97 aa).

Belongs to the GatC family. As to quaternary structure, heterotrimer of A, B and C subunits.

It catalyses the reaction L-glutamyl-tRNA(Gln) + L-glutamine + ATP + H2O = L-glutaminyl-tRNA(Gln) + L-glutamate + ADP + phosphate + H(+). The enzyme catalyses L-aspartyl-tRNA(Asn) + L-glutamine + ATP + H2O = L-asparaginyl-tRNA(Asn) + L-glutamate + ADP + phosphate + 2 H(+). Its function is as follows. Allows the formation of correctly charged Asn-tRNA(Asn) or Gln-tRNA(Gln) through the transamidation of misacylated Asp-tRNA(Asn) or Glu-tRNA(Gln) in organisms which lack either or both of asparaginyl-tRNA or glutaminyl-tRNA synthetases. The reaction takes place in the presence of glutamine and ATP through an activated phospho-Asp-tRNA(Asn) or phospho-Glu-tRNA(Gln). This is Aspartyl/glutamyl-tRNA(Asn/Gln) amidotransferase subunit C from Prochlorococcus marinus (strain MIT 9211).